Here is a 547-residue protein sequence, read N- to C-terminus: Large cysteine-rich periplasmic protein OmcB, serovar E (547 aa).

A signal peptide spans 1 to 22; it reads MNKLIRRAVTIFAVTSVASLFA. A propeptide spanning residues 23 to 40 is cleaved from the precursor; that stretch reads SGVLETSMAESLSTNVIS. The tract at residues 46 to 83 is disordered; sequence AKDNTSHKSKKARKNHSKETLVDRKEVAPVHESKATGP. Over residues 52–61 the composition is skewed to basic residues; sequence HKSKKARKNH. Residues 62 to 79 are compositionally biased toward basic and acidic residues; the sequence is SKETLVDRKEVAPVHESK.

As to quaternary structure, part of a disulfide cross-linked outer membrane complex (COMC) composed of the major outer membrane porin (MOMP), the small cysteine-rich protein (OmcA) and the large cysteine-rich periplasmic protein (OmcB).

It localises to the periplasm. In terms of biological role, in elementary bodies (EBs, the infectious stage, which is able to survive outside the host cell) provides the structural integrity of the outer envelope through disulfide cross-links with the small cysteine-rich protein and the major outer membrane protein. It has been described in publications as the Sarkosyl-insoluble COMC (Chlamydia outer membrane complex), and serves as the functional equivalent of peptidoglycan. This is Large cysteine-rich periplasmic protein OmcB, serovar E (omcB) from Chlamydia trachomatis.